Consider the following 101-residue polypeptide: NADH-quinone oxidoreductase subunit K (101 aa).

The next 3 membrane-spanning stretches (helical) occupy residues 4 to 24, 30 to 50, and 61 to 81; these read LAHF…GIFL, IVLL…FVAF, and VFVF…LAIL.

The protein belongs to the complex I subunit 4L family. NDH-1 is composed of 14 different subunits. Subunits NuoA, H, J, K, L, M, N constitute the membrane sector of the complex.

It localises to the cell inner membrane. It carries out the reaction a quinone + NADH + 5 H(+)(in) = a quinol + NAD(+) + 4 H(+)(out). In terms of biological role, NDH-1 shuttles electrons from NADH, via FMN and iron-sulfur (Fe-S) centers, to quinones in the respiratory chain. The immediate electron acceptor for the enzyme in this species is believed to be ubiquinone. Couples the redox reaction to proton translocation (for every two electrons transferred, four hydrogen ions are translocated across the cytoplasmic membrane), and thus conserves the redox energy in a proton gradient. In Cupriavidus metallidurans (strain ATCC 43123 / DSM 2839 / NBRC 102507 / CH34) (Ralstonia metallidurans), this protein is NADH-quinone oxidoreductase subunit K.